We begin with the raw amino-acid sequence, 222 residues long: Phosphoribosylformylglycinamidine synthase subunit PurQ (222 aa).

The Glutamine amidotransferase type-1 domain maps to 3–222; that stretch reads AAVVVFPGSN…RALSGLLTDA (220 aa). C86 (nucleophile) is an active-site residue. Catalysis depends on residues H194 and E196.

In terms of assembly, part of the FGAM synthase complex composed of 1 PurL, 1 PurQ and 2 PurS subunits.

It localises to the cytoplasm. The enzyme catalyses N(2)-formyl-N(1)-(5-phospho-beta-D-ribosyl)glycinamide + L-glutamine + ATP + H2O = 2-formamido-N(1)-(5-O-phospho-beta-D-ribosyl)acetamidine + L-glutamate + ADP + phosphate + H(+). It carries out the reaction L-glutamine + H2O = L-glutamate + NH4(+). It functions in the pathway purine metabolism; IMP biosynthesis via de novo pathway; 5-amino-1-(5-phospho-D-ribosyl)imidazole from N(2)-formyl-N(1)-(5-phospho-D-ribosyl)glycinamide: step 1/2. Its function is as follows. Part of the phosphoribosylformylglycinamidine synthase complex involved in the purines biosynthetic pathway. Catalyzes the ATP-dependent conversion of formylglycinamide ribonucleotide (FGAR) and glutamine to yield formylglycinamidine ribonucleotide (FGAM) and glutamate. The FGAM synthase complex is composed of three subunits. PurQ produces an ammonia molecule by converting glutamine to glutamate. PurL transfers the ammonia molecule to FGAR to form FGAM in an ATP-dependent manner. PurS interacts with PurQ and PurL and is thought to assist in the transfer of the ammonia molecule from PurQ to PurL. The chain is Phosphoribosylformylglycinamidine synthase subunit PurQ from Ruegeria sp. (strain TM1040) (Silicibacter sp.).